The primary structure comprises 251 residues: Methionine aminopeptidase (251 aa).

A substrate-binding site is contributed by His79. The a divalent metal cation site is built by Asp96, Asp107, and His170. His177 contributes to the substrate binding site. Residues Glu204 and Glu235 each contribute to the a divalent metal cation site.

Belongs to the peptidase M24A family. Methionine aminopeptidase type 1 subfamily. In terms of assembly, monomer. Requires Co(2+) as cofactor. Zn(2+) is required as a cofactor. The cofactor is Mn(2+). Fe(2+) serves as cofactor.

The enzyme catalyses Release of N-terminal amino acids, preferentially methionine, from peptides and arylamides.. In terms of biological role, removes the N-terminal methionine from nascent proteins. The N-terminal methionine is often cleaved when the second residue in the primary sequence is small and uncharged (Met-Ala-, Cys, Gly, Pro, Ser, Thr, or Val). Requires deformylation of the N(alpha)-formylated initiator methionine before it can be hydrolyzed. The sequence is that of Methionine aminopeptidase from Borreliella burgdorferi (strain ATCC 35210 / DSM 4680 / CIP 102532 / B31) (Borrelia burgdorferi).